A 217-amino-acid polypeptide reads, in one-letter code: 3-demethoxyubiquinol 3-hydroxylase (217 aa).

The Fe cation site is built by glutamate 66, glutamate 96, histidine 99, glutamate 148, glutamate 180, and histidine 183.

It belongs to the COQ7 family. Fe cation is required as a cofactor.

Its subcellular location is the cell membrane. The catalysed reaction is a 5-methoxy-2-methyl-3-(all-trans-polyprenyl)benzene-1,4-diol + AH2 + O2 = a 3-demethylubiquinol + A + H2O. It functions in the pathway cofactor biosynthesis; ubiquinone biosynthesis. In terms of biological role, catalyzes the hydroxylation of 2-nonaprenyl-3-methyl-6-methoxy-1,4-benzoquinol during ubiquinone biosynthesis. The chain is 3-demethoxyubiquinol 3-hydroxylase from Xanthomonas campestris pv. campestris (strain 8004).